The sequence spans 983 residues: UPF0182 protein MLBr00644 (983 aa).

7 helical membrane-spanning segments follow: residues 19 to 39 (LIMV…LVDA), 63 to 83 (VVVF…GLAV), 113 to 133 (LIGV…AQSY), 175 to 195 (FVAV…FGGI), 210 to 230 (LQLV…YWLD), 259 to 279 (KLIL…AITL), and 287 to 307 (IGLV…PLIV).

The protein belongs to the UPF0182 family.

The protein resides in the cell membrane. The protein is UPF0182 protein MLBr00644 of Mycobacterium leprae (strain Br4923).